The sequence spans 432 residues: Cyclic GMP-AMP synthase-like receptor (432 aa).

Residues Ser59 and 71–73 (EFD) contribute to the ATP site. Residues Glu71, Asp73, and Asp205 each contribute to the Mg(2+) site. GTP-binding positions include Asp205 and 255-262 (KQTCSVLE). ATP is bound by residues 259-262 (SVLE), Lys284, and 303-307 (TYALK).

The protein belongs to the mab-21 family. Requires Mg(2+) as cofactor. Mn(2+) is required as a cofactor.

The enzyme catalyses GTP + ATP = 2',3'-cGAMP + 2 diphosphate. It catalyses the reaction GTP + ATP = pppGp(2'-5')A + diphosphate. The catalysed reaction is pppGp(2'-5')A = 2',3'-cGAMP + diphosphate. Nucleotidyltransferase that catalyzes the formation of cyclic GMP-AMP (2',3'-cGAMP) from ATP and GTP and plays a key role in innate immunity. Directly binds some unknown ligand, activating the nucleotidyltransferase activity, leading to synthesis of 2',3'-cGAMP, a second messenger that binds to and activates Sting, thereby triggering the immune response via activation of the NF-kappa-B transcription factor. The polypeptide is Cyclic GMP-AMP synthase-like receptor (Pocillopora damicornis (Cauliflower coral)).